A 221-amino-acid polypeptide reads, in one-letter code: Lipoprotein-releasing system ATP-binding protein LolD (221 aa).

Positions 6–220 (LTLKNVSKHY…YKLKHGALNM (215 aa)) constitute an ABC transporter domain. Position 42-49 (42-49 (GSSGSGKS)) interacts with ATP.

The protein belongs to the ABC transporter superfamily. Lipoprotein translocase (TC 3.A.1.125) family. The complex is composed of two ATP-binding proteins (LolD) and two transmembrane proteins (LolC and LolE).

It localises to the cell inner membrane. Part of the ABC transporter complex LolCDE involved in the translocation of mature outer membrane-directed lipoproteins, from the inner membrane to the periplasmic chaperone, LolA. Responsible for the formation of the LolA-lipoprotein complex in an ATP-dependent manner. This is Lipoprotein-releasing system ATP-binding protein LolD from Rickettsia bellii (strain RML369-C).